Reading from the N-terminus, the 766-residue chain is Exocyst complex component 6 (766 aa).

Positions 28-90 form a coiled coil; it reads NTKQIGDQLE…SLDTSLRQIS (63 aa).

It belongs to the SEC15 family. The exocyst complex is composed of Sec3/Exoc1, Sec5/Exoc2, Sec6/Exoc3, Sec8/Exoc4, Sec10/Exoc5, Sec15/Exoc6, Exo70/Exoc7 and Exo84/Exoc8. Interacts with RAB3, RAB8, RAB11 and RAB27. As to expression, detected in developing rhabdomeres in photoreceptor cells.

It is found in the cell projection. It localises to the rhabdomere. Component of the exocyst complex involved in the docking of exocytic vesicles with fusion sites on the plasma membrane. In Drosophila melanogaster (Fruit fly), this protein is Exocyst complex component 6.